The chain runs to 544 residues: NADH-quinone oxidoreductase subunit C/D (544 aa).

The NADH dehydrogenase I subunit C stretch occupies residues 1 to 138 (MLNCDMLIDS…KGQICTETED (138 aa)). Residues 161-544 (MLLNVGPSHP…MNFIAGEFDR (384 aa)) are NADH dehydrogenase I subunit D.

It in the N-terminal section; belongs to the complex I 30 kDa subunit family. In the C-terminal section; belongs to the complex I 49 kDa subunit family. NDH-1 is composed of 13 different subunits. Subunits NuoB, CD, E, F, and G constitute the peripheral sector of the complex.

It is found in the cell inner membrane. The enzyme catalyses a quinone + NADH + 5 H(+)(in) = a quinol + NAD(+) + 4 H(+)(out). Functionally, NDH-1 shuttles electrons from NADH, via FMN and iron-sulfur (Fe-S) centers, to quinones in the respiratory chain. The immediate electron acceptor for the enzyme in this species is believed to be ubiquinone. Couples the redox reaction to proton translocation (for every two electrons transferred, four hydrogen ions are translocated across the cytoplasmic membrane), and thus conserves the redox energy in a proton gradient. The protein is NADH-quinone oxidoreductase subunit C/D of Aliarcobacter butzleri (strain RM4018) (Arcobacter butzleri).